Consider the following 73-residue polypeptide: uncharacterized protein (73 aa).

A signal peptide spans 1–30 (MVDFYFIEEKVAYRAAFTTTGKIAATLGLA).

This is an uncharacterized protein from Archaeoglobus fulgidus (strain ATCC 49558 / DSM 4304 / JCM 9628 / NBRC 100126 / VC-16).